The primary structure comprises 562 residues: Formate--tetrahydrofolate ligase (562 aa).

71–78 (TPAGEGKS) contacts ATP.

This sequence belongs to the formate--tetrahydrofolate ligase family.

The catalysed reaction is (6S)-5,6,7,8-tetrahydrofolate + formate + ATP = (6R)-10-formyltetrahydrofolate + ADP + phosphate. It participates in one-carbon metabolism; tetrahydrofolate interconversion. The protein is Formate--tetrahydrofolate ligase of Bacillus cereus (strain G9842).